Consider the following 134-residue polypeptide: Profilin-3 (134 aa).

Cys-13 and Cys-118 are joined by a disulfide. The Involved in PIP2 interaction motif lies at 84–100 (AVIRGKKGSGGITSKKT). Thr-114 bears the Phosphothreonine mark.

It belongs to the profilin family. In terms of assembly, occurs in many kinds of cells as a complex with monomeric actin in a 1:1 ratio. In terms of processing, phosphorylated by MAP kinases.

It is found in the cytoplasm. The protein localises to the cytoskeleton. Its function is as follows. Binds to actin and affects the structure of the cytoskeleton. At high concentrations, profilin prevents the polymerization of actin, whereas it enhances it at low concentrations. In Olea europaea (Common olive), this protein is Profilin-3.